A 456-amino-acid chain; its full sequence is Major facilitator superfamily domain-containing protein 10 (456 aa).

A run of 11 helical transmembrane segments spans residues valine 25–proline 45, valine 87–leucine 107, leucine 125–leucine 145, valine 149–glycine 169, alanine 179–leucine 199, valine 204–proline 224, leucine 278–valine 298, lysine 311–alanine 328, alanine 343–leucine 363, leucine 365–valine 385, and leucine 422–isoleucine 442.

It belongs to the major facilitator superfamily.

It is found in the nucleus inner membrane. The protein resides in the cell membrane. In terms of biological role, probable organic anion transporter which may serve as a transporter for some non-steroidal anti-inflammatory drugs (NSAIDs) as well as other organic anions across the luminal membranes of renal proximal tubules at the final excretion step into the urine. This chain is Major facilitator superfamily domain-containing protein 10 (MFSD10), found in Bos taurus (Bovine).